Consider the following 1108-residue polypeptide: Multidrug resistance regulator 1 (1108 aa).

Over residues 1 to 19 (MSIATTPIETPKSPKSTEP) the composition is skewed to polar residues. Residues 1 to 27 (MSIATTPIETPKSPKSTEPQVRKRKKV) form a disordered region. Positions 31–59 (CTNCRKRKIRCDRQHPCNNCIKSKKHNAC) form a DNA-binding region, zn(2)-C6 fungal-type. Polar residues predominate over residues 68–83 (PANFSTNGSSHGNTVP). 3 disordered regions span residues 68–138 (PANF…SENE), 968–990 (DQTYSTSSESSSTPNKDSPLDSR), and 1021–1064 (AQQQ…YYGN). Basic and acidic residues-rich tracts occupy residues 86–104 (RPYEESARIPIRFDAEAPR) and 114–123 (NERKNSKKSP). Over residues 124-138 (DNTVANNQQTASENE) the composition is skewed to polar residues. A coiled-coil region spans residues 134–165 (ASENEVTITLSELNMLKQRLQNIEANINAQSN). 2 stretches are compositionally biased toward low complexity: residues 970-980 (TYSTSSESSST) and 1023-1041 (QQRQQESQPFTSSQSQSQS).

The protein resides in the nucleus. Functionally, transcription factor that acts as the central regulator of the MDR1 efflux pump. Other target genes include those encoding oxidoreductases, whose up-regulation in fluconazole-resistant isolates may help to prevent cell damage resulting from the generation of toxic molecules in the presence of fluconazole and thereby contribute to drug resistance. The protein is Multidrug resistance regulator 1 of Candida albicans (strain SC5314 / ATCC MYA-2876) (Yeast).